A 548-amino-acid polypeptide reads, in one-letter code: Frizzled-7 (548 aa).

The N-terminal stretch at 1-19 is a signal peptide; the sequence is MFATVSLLFCLLLQPSPSA. The Extracellular segment spans residues 20 to 230; sequence QQYHGEKGIS…EEEVRFARLW (211 aa). Residues 31–150 enclose the FZ domain; the sequence is PDHGFCQPIS…HGAGEICVGQ (120 aa). Cystine bridges form between C36-C97, C44-C90, C81-C118, C107-C147, and C111-C135. The N-linked (GlcNAc...) asparagine glycan is linked to N50. N-linked (GlcNAc...) asparagine glycosylation occurs at N151. The helical transmembrane segment at 231 to 251 threads the bilayer; that stretch reads VGIWAILCGISTLFTVLTYLV. Topologically, residues 252–262 are cytoplasmic; it reads DMRRFSYPERP. Residues 263–283 traverse the membrane as a helical segment; it reads IIFLSGCYFMVAVAYTAGFLL. Over 284–310 the chain is Extracellular; that stretch reads EERGVCVERFSEDSYRTVAQGTKKEGC. Residues 311 to 331 traverse the membrane as a helical segment; the sequence is TILFMILYFFGMASSIWWVIL. Residues 332–353 lie on the Cytoplasmic side of the membrane; sequence SLTWFLAAGMKWGHEAIEANSQ. A helical membrane pass occupies residues 354 to 374; that stretch reads YFHLAAWAVPAVKTITILAMG. The Extracellular segment spans residues 375–397; that stretch reads QVDGDILSGVCYVGINSVDSLRG. Residues 398–418 traverse the membrane as a helical segment; sequence FVLAPLFVYLFIGTSFLLAGF. The Cytoplasmic portion of the chain corresponds to 419 to 444; it reads VSLFRIRTIMKHDGTKTEKLEKLMVR. The chain crosses the membrane as a helical span at residues 445–465; that stretch reads IGVFSVMYTVPATIVLACYFY. Topologically, residues 466-502 are extracellular; sequence EQAFRDTWEKTWLVQTCKGFAVPCPNYNFAPMSPDFT. The helical transmembrane segment at 503-523 threads the bilayer; that stretch reads VFMIKYLMTMIVGITSSFWIW. Residues 524 to 548 lie on the Cytoplasmic side of the membrane; the sequence is SGKTLQSWRRFYHRLSNGGKGETAV. A Lys-Thr-X-X-X-Trp motif, mediates interaction with the PDZ domain of Dvl family members motif is present at residues 526–531; sequence KTLQSW. Residues 546-548 carry the PDZ-binding motif; sequence TAV.

The protein belongs to the G-protein coupled receptor Fz/Smo family. As to quaternary structure, interacts with wnt11 and sdc4. The extracellular domain interacts with the extracellular domain of pcdh8/papc.

The protein resides in the cell membrane. Its subcellular location is the endosome membrane. Its function is as follows. Receptor for Wnt proteins. Acts in both canonical and non-canonical Wnt pathways. Although different papers report differing Wnt preferences, wnt5a, wnt8b and wnt11 have been proposed as synergists. In the canonical Wnt pathway, acts via beta-catenin to promote the expression of the dorsal genes siamois, twin and nodal3 and to establish the dorsal axis of the embryo and induce dorsal mesoderm formation. In a non-canonical Wnt/planar cell polarity (PCP) pathway, acts with sdc4 and dvl2/dsh to regulate convergent extension movements in gastrulation. Triggers phosphorylation of dvl2/dsh and its translocation to the plasma membrane. In a third branch of Wnt signaling, acts in a non-canonical pathway via trimeric G proteins, and independently of dvl2/dsh, to recruit protein kinase C (PKC) to the membrane and thus activate PKC. PKC signaling controls cell sorting and tissue separation during gastrulation. In Xenopus tropicalis (Western clawed frog), this protein is Frizzled-7.